A 324-amino-acid polypeptide reads, in one-letter code: NADH-ubiquinone oxidoreductase chain 1 (324 aa).

8 consecutive transmembrane segments (helical) span residues 9–29 (LINP…LTLV), 75–95 (ILFL…WAPM), 106–126 (LGIL…LGSG), 146–166 (ISYE…SGGY), 178–198 (TWLL…TLAE), 212–232 (ELVS…FFLA), 259–279 (ELMT…FLWM), and 299–319 (FLPI…ALAG).

The protein belongs to the complex I subunit 1 family. As to quaternary structure, core subunit of respiratory chain NADH dehydrogenase (Complex I) which is composed of 45 different subunits.

The protein resides in the mitochondrion inner membrane. The enzyme catalyses a ubiquinone + NADH + 5 H(+)(in) = a ubiquinol + NAD(+) + 4 H(+)(out). Core subunit of the mitochondrial membrane respiratory chain NADH dehydrogenase (Complex I) which catalyzes electron transfer from NADH through the respiratory chain, using ubiquinone as an electron acceptor. Essential for the catalytic activity and assembly of complex I. The polypeptide is NADH-ubiquinone oxidoreductase chain 1 (mt-nd1) (Danio rerio (Zebrafish)).